The chain runs to 41 residues: GTPCDCYGYTGVYWFMLSRCPSGYGYNLSCHYFMGICCVKR.

Disulfide bonds link cysteine 4–cysteine 37, cysteine 6–cysteine 30, and cysteine 20–cysteine 38.

Belongs to the sea anemone type 3 (BDS) potassium channel toxin family.

It is found in the secreted. Its subcellular location is the nematocyst. In terms of biological role, toxin with different activities on acid-sensing ion channels (ASIC) and nicotinic acetylcholine receptors. Is able to bind T.californica muscle-type nicotinic acetylcholine receptors (nAChR) (alpha-1-beta-1-delta-epsilon (CHRNA1-CHRNB1-CHRND-CHRNE)), and human alpha-7/CHRNA7 nicotinic acetylcholine receptors. Weakly and reversibly inhibits rat homomeric ASIC1 (isoform ASIC1a) (IC(50)=1.25 uM), while it potentiates rat homomeric ASIC3 (EC(50)=1.53 uM). Rat ASIC1a current inhibition is not complete, and reaches a maximum of 86% inhibition. On rat ASIC3, does not activate the channel itself, but produces a remarkable potentiation of the transient current resulting from the acidic pulse. At the maximal applied concentration, elicits responses that are twice as high as those produced by extracellular protons. Surprisingly, shows a different activity on human ASIC3. On the truncated human ASIC3 (ASIC3-D20), the toxin weakly inhibits the channel. Molecular modeling interaction with rat ASIC1a suggests that it hinders the collapse of acidic pockets and stabilizes nonconducting channels state. In vivo, causes an anxiolytic effect on mouse behavior. Also shows an analgesic activity in an acid-induced muscle pain model, and important anti-inflammatory effect in models of acute local inflammation. This Heteractis magnifica (Magnificent sea anemone) protein is Pi-stichotoxin-Hmg5c.